The sequence spans 341 residues: RNA 3'-terminal phosphate cyclase (341 aa).

ATP-binding positions include Gln-100 and 283 to 287 (FLGDQ). His-307 functions as the Tele-AMP-histidine intermediate in the catalytic mechanism.

The protein belongs to the RNA 3'-terminal cyclase family. Type 1 subfamily.

The protein resides in the cytoplasm. The enzyme catalyses a 3'-end 3'-phospho-ribonucleotide-RNA + ATP = a 3'-end 2',3'-cyclophospho-ribonucleotide-RNA + AMP + diphosphate. Catalyzes the conversion of 3'-phosphate to a 2',3'-cyclic phosphodiester at the end of RNA. The mechanism of action of the enzyme occurs in 3 steps: (A) adenylation of the enzyme by ATP; (B) transfer of adenylate to an RNA-N3'P to produce RNA-N3'PP5'A; (C) and attack of the adjacent 2'-hydroxyl on the 3'-phosphorus in the diester linkage to produce the cyclic end product. The biological role of this enzyme is unknown but it is likely to function in some aspects of cellular RNA processing. This Pyrococcus horikoshii (strain ATCC 700860 / DSM 12428 / JCM 9974 / NBRC 100139 / OT-3) protein is RNA 3'-terminal phosphate cyclase (rtcA).